Here is a 228-residue protein sequence, read N- to C-terminus: Upstream activation factor subunit UAF30 (228 aa).

The 56-residue stretch at 1–56 (MAELNDYSTMIDILLSDMDLETVTTKKVRMALKEVYAIDVESQGKAINKLIRKHLD) folds into the DEK-C domain. Residues 89-111 (SKRSSGEEKNDSETKGTHVEKKK) are compositionally biased toward basic and acidic residues. Residues 89-118 (SKRSSGEEKNDSETKGTHVEKKKGTVSKSP) form a disordered region. Residues 119–195 (ISTRKVTLSK…HKILASHMTE (77 aa)) enclose the SWIB/MDM2 domain. Residues 209-228 (VRRKEKPIVSDSEQSDTKGI) form a disordered region. Phosphoserine occurs at positions 218, 220, and 223.

In terms of assembly, component of the UAF (upstream activation factor) complex which consists of UAF30, RRN5, RRN9, RRN10, and histones H3 and H4.

The protein localises to the nucleus. The protein resides in the nucleolus. Functionally, nonessential component of the UAF (upstream activation factor) complex which interacts with the upstream element of the RNA polymerase I promoter and forms a stable preinitiation complex. Together with SPT15/TBP UAF seems to stimulate basal transcription to a fully activated level. UAF30 seems to play a role in silencing transcription by RNA polymerase II. This is Upstream activation factor subunit UAF30 (UAF30) from Saccharomyces cerevisiae (strain ATCC 204508 / S288c) (Baker's yeast).